The following is a 335-amino-acid chain: Adenine deaminase (335 aa).

Zn(2+) is bound by residues histidine 17, histidine 19, and histidine 197. The Proton donor role is filled by glutamate 200. Zn(2+) is bound at residue aspartate 278. Aspartate 279 contacts substrate.

It belongs to the metallo-dependent hydrolases superfamily. Adenosine and AMP deaminases family. Adenine deaminase type 2 subfamily. The cofactor is Zn(2+).

It catalyses the reaction adenine + H2O + H(+) = hypoxanthine + NH4(+). In terms of biological role, catalyzes the hydrolytic deamination of adenine to hypoxanthine. Plays an important role in the purine salvage pathway and in nitrogen catabolism. The protein is Adenine deaminase of Marinomonas sp. (strain MWYL1).